The sequence spans 911 residues: General transcription factor 3C polypeptide 2 (911 aa).

Disordered stretches follow at residues 24 to 187 and 205 to 297; these read DSPG…RRRA and ALPA…MAPN. The segment covering 35–46 has biased composition (polar residues); sequence DVKTSSEMTSAE. Residue Ser-63 is modified to Phosphoserine. Basic and acidic residues predominate over residues 64–81; it reads PDQRRLPPEQESLSRLEQ. Residues 92 to 112 show a composition bias toward basic residues; that stretch reads SKPRASKPGRKRGGRTRKGPK. The span at 114 to 123 shows a compositional bias: pro residues; sequence PQQPNPPSAP. Phosphoserine occurs at positions 132, 165, 167, 220, and 260. The span at 253–262 shows a compositional bias: acidic residues; it reads EAEDVEESEG. A compositionally biased stretch (low complexity) spans 263–277; that stretch reads PSESSSEPEPVVPRS. WD repeat units lie at residues 366 to 426, 427 to 483, 484 to 535, 536 to 603, 604 to 654, and 655 to 690; these read PEDG…MNET, HPLS…AWEL, PGTP…IYKV, QCVA…SLKL, YPFQ…NSIK, and RFLS…HYID. Ser-597 is subject to Phosphoserine. The segment at 765 to 785 is disordered; the sequence is SPEGPDHSSASSGVPNPPKAR. Phosphoserine is present on residues Ser-871, Ser-892, and Ser-893. The disordered stretch occupies residues 889 to 911; sequence FQPSSPTRRPGFSPTSHRLLPTP. Thr-895 carries the phosphothreonine modification. Residue Ser-901 is modified to Phosphoserine.

In terms of assembly, part of the TFIIIC subcomplex TFIIIC2, consisting of six subunits, GTF3C1, GTF3C2, GTF3C3, GTF3C4, GTF3C5 and GTF3C6.

It is found in the nucleus. Required for RNA polymerase III-mediated transcription. Component of TFIIIC that initiates transcription complex assembly on tRNA and is required for transcription of 5S rRNA and other stable nuclear and cytoplasmic RNAs. May play a direct role in stabilizing interactions of TFIIIC2 with TFIIIC1. The polypeptide is General transcription factor 3C polypeptide 2 (GTF3C2) (Homo sapiens (Human)).